Reading from the N-terminus, the 364-residue chain is Acetylserotonin O-methyltransferase 1 (364 aa).

G208, D231, D251, and K265 together coordinate S-adenosyl-L-homocysteine. The Proton acceptor role is filled by H269. Residues E300 and E330 contribute to the active site.

Belongs to the class I-like SAM-binding methyltransferase superfamily. Cation-independent O-methyltransferase family. In terms of assembly, homodimer. In terms of tissue distribution, expressed in leaves, stems and flowers.

Its subcellular location is the cytoplasm. It carries out the reaction N-acetylserotonin + S-adenosyl-L-methionine = melatonin + S-adenosyl-L-homocysteine + H(+). It participates in aromatic compound metabolism; melatonin biosynthesis; melatonin from serotonin: step 1/2. Methyltransferase which catalyzes the transfer of a methyl group onto N-acetylserotonin, producing melatonin (N-acetyl-5-methoxytryptamine). The polypeptide is Acetylserotonin O-methyltransferase 1 (Oryza sativa subsp. japonica (Rice)).